Here is a 482-residue protein sequence, read N- to C-terminus: MATYYKTGSSEIYSRPEFVPGNAMNYTNSFTETFPRDSTNNVSPSKEIQVLSSLGGVSQMVEIQDSGSWRDQEDNDRNRFPVMRRLGLSSQIETSRGNNNNEYATQVVSGFTRTIHNSKYLKAAQELLDETVNVKKALKQFQPEGDKINEVKEKNLQTNTAEIPQAERQELQSKLSKLLSILDEVDRNYKQYYHQMQIVVSSFDVIAGCGAAKPYTALALQTISRHFRCLRDAISGQILVIRKSLGGEQDGSDGRGVGISRLRNVDQQVRQQRALQRLGVMQPHTWRPQRGLPDSSVLVLRAWLFEHFLHPYPKDSDKIMLARQTGLSRGQVSNWFINARVRLWKPMVEEMYKEEFTDALQENDPNQSSENTPEITEIQELQTESSSNNGHVPGVASSSMRQNTVAHGGDRFMMVTDMTRNGNGGMSLTLGIQNSDARGDVPMSGGIDNYKNTISGTDLQYLNSRNHQHQIGSSQLLHDFVA.

Residues 118–134 (SKYLKAAQELLDETVNV) form an SR/KY domain region. The tract at residues 167–238 (ERQELQSKLS…CLRDAISGQI (72 aa)) is BELL domain. The segment at residues 285-347 (TWRPQRGLPD…NARVRLWKPM (63 aa)) is a DNA-binding region (homeobox). Residues 358-401 (DALQENDPNQSSENTPEITEIQELQTESSSNNGHVPGVASSSMR) form a disordered region. The segment covering 363–401 (NDPNQSSENTPEITEIQELQTESSSNNGHVPGVASSSMR) has biased composition (polar residues).

The protein belongs to the TALE/BELL homeobox family. In terms of assembly, may form heterodimeric complexes with TALE/KNOX proteins.

It is found in the nucleus. This is BEL1-like homeodomain protein 7 (BLH7) from Arabidopsis thaliana (Mouse-ear cress).